A 126-amino-acid polypeptide reads, in one-letter code: Large ribosomal subunit protein bL12 (126 aa).

Belongs to the bacterial ribosomal protein bL12 family. As to quaternary structure, homodimer. Part of the ribosomal stalk of the 50S ribosomal subunit. Forms a multimeric L10(L12)X complex, where L10 forms an elongated spine to which 2 to 4 L12 dimers bind in a sequential fashion. Binds GTP-bound translation factors.

Functionally, forms part of the ribosomal stalk which helps the ribosome interact with GTP-bound translation factors. Is thus essential for accurate translation. This Streptococcus pyogenes serotype M28 (strain MGAS6180) protein is Large ribosomal subunit protein bL12.